The chain runs to 892 residues: Dystroglycan 1 (892 aa).

The N-terminal stretch at 1-27 (MRMSAGLSLLLPLWGRTFLLLLSVAMA) is a signal peptide. Residues 28–750 (QSHWPSEAGR…SSEDDVYLHT (723 aa)) are Extracellular-facing. The interval 30–405 (HWPSEAGRDW…GQIRPTMTIP (376 aa)) is required for laminin recognition. Residues 46 to 68 (SMHSVLSDLHEAVPTVVGIPDGI) are O-glycosylated at one site. Asn138 carries N-linked (GlcNAc...) asparagine glycosylation. Cys179 and Cys261 are oxidised to a cystine. Residues 313 to 482 (ATPTPVTAIG…PPTRIRTTTS (170 aa)) form a mucin-like domain region. O-linked (Man6P...) threonine glycans are attached at residues Thr314, Thr316, and Thr376. A disordered region spans residues 378–497 (TLGPIQPTRV…GEPNQRPELK (120 aa)). The segment covering 410-444 (PTAVATPPTTTTKKPRVSTPKPATPSTDSSTTTTR) has biased composition (low complexity). The O-glycosylated at seven sites with GalNAc stretch occupies residues 460–482 (TTKAPITRLETASPPTRIRTTTS). The Peptidase S72 domain occupies 600 to 709 (RAPARFKAKF…SSIAVTGSGS (110 aa)). Residues Asn638, Asn646, and Asn658 are each glycosylated (N-linked (GlcNAc...) asparagine). A disulfide bridge links Cys666 with Cys710. Residues 721–742 (PRRVPSEVPSTDVPDRDPEKSS) form a disordered region. The span at 733-742 (VPDRDPEKSS) shows a compositional bias: basic and acidic residues. The chain crosses the membrane as a helical span at residues 751-771 (VIPAVVVAAILLIAGIIAMIC). The Cytoplasmic portion of the chain corresponds to 772–892 (YRKKRKGKLT…YRSPPPYVPP (121 aa)). The Nuclear localization signal signature appears at 773–779 (RKKRKGK). At Thr787 the chain carries Phosphothreonine. A required for interaction with CAV3 region spans residues 816–892 (LQEEKAPLPP…YRSPPPYVPP (77 aa)). The segment at 820–892 (KAPLPPPEYP…YRSPPPYVPP (73 aa)) is disordered. The segment covering 829 to 843 (PNQSVPETTPLNQDT) has biased composition (polar residues). Residues 856-867 (NAPPYQPPPPFT) are compositionally biased toward pro residues. The tract at residues 877–892 (PKNMTPYRSPPPYVPP) is required for binding DMD and UTRN. The PPXY motif signature appears at 886 to 889 (PPPY). At Tyr889 the chain carries Phosphotyrosine; by SRC.

In terms of assembly, monomer. Heterodimer of alpha- and beta-dystroglycan subunits which are the central components of the dystrophin-glycoprotein complex. This complex then can form a dystrophin-associated glycoprotein complex (DGC) which is composed of three subcomplexes: a cytoplasmic complex comprised of DMD (or UTRN), DTNA and a number of syntrophins, such as SNTB1, SNTB2, SNTG1 and SNTG2, the transmembrane dystroglycan complex, and the sarcoglycan-sarcospan complex. Interacts (via the N-terminal of alphaDAG1) with LARGE1; the interaction enhances laminin binding. Interacts with SGCD. Interacts with AGR2 and AGR3. Interacts (betaDAG1) with DMD; the interaction is inhibited by phosphorylation on the PPXY motif. Interacts (betaDAG1, via its PPXY motif) with UTRN (via its WWW and ZZ domains); the interaction is inhibited by phosphorylation on the PPXY motif. Interacts (betaDAG1, via its phosphorylated PPXY motif) with the SH2 domain-containing proteins, FYN, CSK, NCK and SHC. Interacts (betaDAG1) with CAV3 (via a central WW-like domain); the interaction disrupts the binding of DMD. BetaDAG1 directly interacts with ANK3, but not with ANK2; this interaction does not interfere with DMD-binding and is required for retention at costameres. Identified in a dystroglycan complex that contains at least PRX, DRP2, UTRN, DMD and DAG1. Interacts with POMGNT1. BetaDAG1 interacts with CD93. Post-translationally, O-glycosylated. POMGNT1 catalyzes the initial addition of N-acetylglucosamine, giving rise to the GlcNAc(beta1-2)Man(alpha1-)O-Ser/Thr moiety and thus providing the necessary basis for the addition of further carbohydrate moieties. Heavily O-glycosylated comprising of up to two thirds of its mass and the carbohydrate composition differs depending on tissue type. Mucin-type O-glycosylation is important for ligand binding activity. O-mannosylation is found in high abundance in both brain and muscle where the most abundant glycan is Sia-alpha-2-3-Gal-beta-1-4-Glc-NAc-beta-1-2-Man. In muscle, glycosylation on Thr-314, Thr-316 and Thr-376 by a phosphorylated O-mannosyl glycan with the structure 2-(N-acetylamido)-2-deoxygalactosyl-beta-1,3-2-(N-acetylamido)-2-deoxyglucosyl-beta-1,4-6-phosphomannose is mediated by like-acetylglucosaminyltransferase (LARGE1) protein amd is required for laminin binding. O-glycosylated in the N-terminal region with a core 1 or possibly core 8 glycan. The brain form displays a unique glycosylation pattern which is absent in other tissues; this form shows enhanced binding to laminin LAMA5 compared to the skeletal muscle form. In terms of processing, N-glycosylated. Autolytic cleavage produces the alpha and beta subunits. In cutaneous cells, as well as in certain pathological conditions, shedding of beta-dystroglycan can occur releasing a peptide of about 30 kDa. Post-translationally, SRC-mediated phosphorylation of the PPXY motif of the beta subunit recruits SH2 domain-containing proteins, but inhibits binding to WWW domain-containing proteins, DMD and UTRN. This phosphorylation also inhibits nuclear entry.

It localises to the secreted. The protein localises to the extracellular space. Its subcellular location is the cell membrane. It is found in the cytoplasm. The protein resides in the cytoskeleton. It localises to the nucleus. The protein localises to the nucleoplasm. Its subcellular location is the sarcolemma. It is found in the postsynaptic cell membrane. Functionally, the dystroglycan complex is involved in a number of processes including laminin and basement membrane assembly, sarcolemmal stability, cell survival, peripheral nerve myelination, nodal structure, cell migration, and epithelial polarization. In terms of biological role, extracellular peripheral glycoprotein that acts as a receptor for extracellular matrix proteins containing laminin-G domains. Receptor for laminin-2 (LAMA2) and agrin in peripheral nerve Schwann cells. Also acts as a receptor for laminin LAMA5. Transmembrane protein that plays important roles in connecting the extracellular matrix to the cytoskeleton. Acts as a cell adhesion receptor in both muscle and non-muscle tissues. Receptor for both DMD and UTRN and, through these interactions, scaffolds axin to the cytoskeleton. Also functions in cell adhesion-mediated signaling and implicated in cell polarity. This Canis lupus familiaris (Dog) protein is Dystroglycan 1.